The following is a 326-amino-acid chain: Transmembrane protein 255B (326 aa).

The next 4 membrane-spanning stretches (helical) occupy residues 26–46, 55–75, 85–105, and 200–220; these read LWFV…GLAA, VGGY…IIGI, LVAA…CAIV, and AVLN…LGAF. The tract at residues 284-326 is disordered; that stretch reads LASSEDLQPPSPSSSGSGLPGQAPPCYAPTYFPPGEKPPPYAP. Residues 305-326 show a composition bias toward pro residues; the sequence is QAPPCYAPTYFPPGEKPPPYAP.

The protein belongs to the TMEM255 family.

It localises to the membrane. The chain is Transmembrane protein 255B (TMEM255B) from Homo sapiens (Human).